We begin with the raw amino-acid sequence, 638 residues long: Threonine--tRNA ligase (638 aa).

Residues M1–T61 enclose the TGS domain. Positions D243–P534 are catalytic. Zn(2+) contacts are provided by C334, H385, and H511.

Belongs to the class-II aminoacyl-tRNA synthetase family. As to quaternary structure, homodimer. The cofactor is Zn(2+).

It is found in the cytoplasm. It carries out the reaction tRNA(Thr) + L-threonine + ATP = L-threonyl-tRNA(Thr) + AMP + diphosphate + H(+). Catalyzes the attachment of threonine to tRNA(Thr) in a two-step reaction: L-threonine is first activated by ATP to form Thr-AMP and then transferred to the acceptor end of tRNA(Thr). Also edits incorrectly charged L-seryl-tRNA(Thr). The chain is Threonine--tRNA ligase from Alteromonas mediterranea (strain DSM 17117 / CIP 110805 / LMG 28347 / Deep ecotype).